A 165-amino-acid chain; its full sequence is V-type proton ATPase 16 kDa proteolipid subunit (165 aa).

Topologically, residues 1-10 (MPSTFSGDET) are lumenal. A helical transmembrane segment spans residues 11 to 33 (APFFGFLGAAAALVFSCMGAAYG). The Cytoplasmic segment spans residues 34–55 (TAKSGVGVASMGVMRPELVMKS). Residues 56-76 (IVPVVMAGVLGIYGLIIAVII) traverse the membrane as a helical segment. Residues 77 to 95 (STGINPKTKSYYLFDGYAH) lie on the Lumenal side of the membrane. Residues 96-117 (LSSGLACGLAGLSAGMAIGIVG) form a helical membrane-spanning segment. Topologically, residues 118–129 (DAGVRANAQQPK) are cytoplasmic. Residues 130 to 155 (LFVGMILILIFAEALALYGLIVGIIL) traverse the membrane as a helical segment. The Lumenal portion of the chain corresponds to 156–165 (SSRAGQSRAE).

This sequence belongs to the V-ATPase proteolipid subunit family. V-ATPase is a heteromultimeric enzyme composed of a peripheral catalytic V1 complex (main components: subunits A, B, C, D, E, and F) attached to an integral membrane V0 proton pore complex (main component: the proteolipid protein; which is present as a hexamer that forms the proton-conducting pore).

It is found in the vacuole membrane. Proton-conducting pore forming subunit of the membrane integral V0 complex of vacuolar ATPase. V-ATPase is responsible for acidifying a variety of intracellular compartments in eukaryotic cells. In Nicotiana tabacum (Common tobacco), this protein is V-type proton ATPase 16 kDa proteolipid subunit.